The chain runs to 465 residues: Phytase A (465 aa).

A signal peptide spans Met-1–Gly-26. Cys-30 and Cys-39 are joined by a disulfide. Positions 49, 50, 80, 81, 84, and 87 each coordinate 1D-myo-inositol hexakisphosphate. 4 cysteine pairs are disulfide-bonded: Cys-70–Cys-412, Cys-213–Cys-463, Cys-262–Cys-280, and Cys-434–Cys-442. The active-site Nucleophile is His-81. Residue Asn-104 is glycosylated (N-linked (GlcNAc...) asparagine). Arg-164 is a binding site for 1D-myo-inositol hexakisphosphate. The N-linked (GlcNAc...) asparagine glycan is linked to Asn-205. Asp-209 provides a ligand contact to 1D-myo-inositol hexakisphosphate. Asn-228 is a glycosylation site (N-linked (GlcNAc...) asparagine). A 1D-myo-inositol hexakisphosphate-binding site is contributed by Lys-299. Asn-337 and Asn-350 each carry an N-linked (GlcNAc...) asparagine glycan. 1D-myo-inositol hexakisphosphate contacts are provided by His-359 and Asp-360. An N-linked (GlcNAc...) asparagine glycan is attached at Asn-374.

Belongs to the histidine acid phosphatase family. In terms of assembly, monomer.

It is found in the secreted. The catalysed reaction is 1D-myo-inositol hexakisphosphate + H2O = 1D-myo-inositol 1,2,4,5,6-pentakisphosphate + phosphate. It carries out the reaction 1D-myo-inositol 1,2,4,5,6-pentakisphosphate + H2O = 1D-myo-inositol 1,2,5,6-tetrakisphosphate + phosphate. It catalyses the reaction 1D-myo-inositol 1,2,5,6-tetrakisphosphate + H2O = 1D-myo-inositol 1,2,6-trisphosphate + phosphate. The enzyme catalyses 1D-myo-inositol 1,2,6-trisphosphate + H2O = 1D-myo-inositol 1,2-bisphosphate + phosphate. The catalysed reaction is 1D-myo-inositol 1,2-bisphosphate + H2O = 1D-myo-inositol 2-phosphate + phosphate. Catalyzes the phosphate monoester hydrolysis of phytic acid (myo-inositol hexakisphosphate), which results in the stepwise formation of myo-inositol pentakis-, tetrakis-, tris-, bis-, and monophosphates, as well as the liberation of inorganic phosphate. Myo-inositol 2-monophosphate is the end product. Has a broad substrate specificity and is also able to dephosphorylate other classic acid phosphatase substrates such as p-nitrophenyl phosphate, phenyl phosphate, fructose 1,6-bisphosphate, fructose 6-phosphate, glucose 6-phosphate, ribose 5-phosphate, alpha-glycerophosphate, beta-glycerophosphate, 3-phosphoglycerate, phosphoenolpyruvate, as well as ADP and ATP. The protein is Phytase A (phyA) of Aspergillus fumigatus (strain ATCC MYA-4609 / CBS 101355 / FGSC A1100 / Af293) (Neosartorya fumigata).